Consider the following 228-residue polypeptide: Ribonuclease 3 (228 aa).

Residues 5-128 enclose the RNase III domain; it reads LNRLMARLGY…IIGAMLLDGG (124 aa). E41 is a Mg(2+) binding site. D45 is a catalytic residue. Residues D114 and E117 each contribute to the Mg(2+) site. Residue E117 is part of the active site. Positions 155-225 constitute a DRBM domain; sequence DAKTRLQEWL…ASLALEWLEQ (71 aa).

Belongs to the ribonuclease III family. As to quaternary structure, homodimer. Mg(2+) is required as a cofactor.

Its subcellular location is the cytoplasm. The enzyme catalyses Endonucleolytic cleavage to 5'-phosphomonoester.. Functionally, digests double-stranded RNA. Involved in the processing of primary rRNA transcript to yield the immediate precursors to the large and small rRNAs (23S and 16S). Processes some mRNAs, and tRNAs when they are encoded in the rRNA operon. Processes pre-crRNA and tracrRNA of type II CRISPR loci if present in the organism. The chain is Ribonuclease 3 from Alcanivorax borkumensis (strain ATCC 700651 / DSM 11573 / NCIMB 13689 / SK2).